A 347-amino-acid polypeptide reads, in one-letter code: GTPase Obg (347 aa).

The 159-residue stretch at 1–159 (MHFIDQAEIE…VRLRLELKLI (159 aa)) folds into the Obg domain. Positions 160–328 (AEVGIVGLPN…LLQRVWQCLG (169 aa)) constitute an OBG-type G domain. GTP is bound by residues 166–173 (GLPNAGKS), 191–195 (FTTLQ), 213–216 (DIPG), 280–283 (NKID), and 309–311 (SAI). Residues S173 and T193 each contribute to the Mg(2+) site.

It belongs to the TRAFAC class OBG-HflX-like GTPase superfamily. OBG GTPase family. In terms of assembly, monomer. The cofactor is Mg(2+).

It is found in the cytoplasm. In terms of biological role, an essential GTPase which binds GTP, GDP and possibly (p)ppGpp with moderate affinity, with high nucleotide exchange rates and a fairly low GTP hydrolysis rate. Plays a role in control of the cell cycle, stress response, ribosome biogenesis and in those bacteria that undergo differentiation, in morphogenesis control. This Synechococcus sp. (strain JA-2-3B'a(2-13)) (Cyanobacteria bacterium Yellowstone B-Prime) protein is GTPase Obg.